The following is a 677-amino-acid chain: MTQVAKKILVTCALPYANGSIHLGHMLEHIQADVWVRYQRMRGHEVNFICADDAHGTPIMLKAQQLGITPEQMIGEMSQEHQTDFAGFNISYDNYHSTHSEENRQLSELIYSRLKENGFIKNRTISQLYDPEKGMFLPDRFVKGTCPKCKSPDQYGDNCEVCGATYSPTELIEPKSVVSGATPVMRDSEHFFFDLPSFSEMLQAWTRSGALQEQVANKMQEWFESGLQQWDISRDAPYFGFEIPNAPGKYFYVWLDAPIGYMGSFKNLCDKRGDSVSFDEYWKKDSTAELYHFIGKDIVYFHSLFWPAMLEGSNFRKPTNLFVHGYVTVNGAKMSKSRGTFIKASTWLNHFDADSLRYYYTAKLSSRIDDIDLNLEDFVQRVNADIVNKVVNLASRNAGFINKRFDGVLASELADPQLYKTFTDAAEVIGEAWESREFGKAVREIMALADLANRYVDEQAPWVVAKQEGRDADLQAICSMGINLFRVLMTYLKPVLPKLTERAEAFLNTELTWDGIQQPLLGHKVNPFKALYNRIDMKQVEALVEASKEEVKAAAAPVTGPLADDPIQETITFDDFAKVDLRVALIENAEFVEGSDKLLRLTLDLGGEKRNVFSGIRSAYPDPQALIGRHTIMVANLAPRKMRFGISEGMVMAAGPGGKDIFLLSPDAGAKPGHQVK.

Residues 15–25 (PYANGSIHLGH) carry the 'HIGH' region motif. Positions 146, 149, 159, and 162 each coordinate Zn(2+). The short motif at 333-337 (KMSKS) is the 'KMSKS' region element. K336 lines the ATP pocket. Residues 575-677 (DFAKVDLRVA…AGAKPGHQVK (103 aa)) form the tRNA-binding domain.

The protein belongs to the class-I aminoacyl-tRNA synthetase family. MetG type 1 subfamily. As to quaternary structure, homodimer. The cofactor is Zn(2+).

Its subcellular location is the cytoplasm. The catalysed reaction is tRNA(Met) + L-methionine + ATP = L-methionyl-tRNA(Met) + AMP + diphosphate. In terms of biological role, is required not only for elongation of protein synthesis but also for the initiation of all mRNA translation through initiator tRNA(fMet) aminoacylation. The chain is Methionine--tRNA ligase from Escherichia coli (strain SE11).